We begin with the raw amino-acid sequence, 427 residues long: Ribosome biogenesis protein WDR12 homolog (427 aa).

The tract at residues 13-97 (LQLHLYTKQK…EDTVELEYVE (85 aa)) is ubiquitin-like (UBL) domain. 7 WD repeats span residues 109 to 146 (LHDD…KLTI), 148 to 190 (GHIA…NSVE), 197 to 236 (GHER…DGDS), 260 to 298 (GHRE…IKSE), 301 to 339 (GHKS…GTIV), 345 to 385 (GHTQ…APIF), and 389 to 427 (GHED…GEQK).

This sequence belongs to the WD repeat WDR12/YTM1 family.

It is found in the nucleus. Its subcellular location is the nucleolus. The protein localises to the nucleoplasm. Functionally, required for maturation of ribosomal RNAs and formation of the large ribosomal subunit. This Aedes aegypti (Yellowfever mosquito) protein is Ribosome biogenesis protein WDR12 homolog.